Reading from the N-terminus, the 358-residue chain is 3-dehydroquinate synthase (358 aa).

Residues 72–77, 106–110, 130–131, lysine 143, and lysine 151 contribute to the NAD(+) site; these read GGERVK, GALLD, and ST. Residues glutamate 184, histidine 245, and histidine 261 each coordinate Zn(2+).

It belongs to the sugar phosphate cyclases superfamily. Dehydroquinate synthase family. NAD(+) serves as cofactor. The cofactor is Co(2+). Zn(2+) is required as a cofactor.

It is found in the cytoplasm. The catalysed reaction is 7-phospho-2-dehydro-3-deoxy-D-arabino-heptonate = 3-dehydroquinate + phosphate. The protein operates within metabolic intermediate biosynthesis; chorismate biosynthesis; chorismate from D-erythrose 4-phosphate and phosphoenolpyruvate: step 2/7. In terms of biological role, catalyzes the conversion of 3-deoxy-D-arabino-heptulosonate 7-phosphate (DAHP) to dehydroquinate (DHQ). This is 3-dehydroquinate synthase (aroB) from Aeropyrum pernix (strain ATCC 700893 / DSM 11879 / JCM 9820 / NBRC 100138 / K1).